The chain runs to 207 residues: Probable RNA 2'-phosphotransferase (207 aa).

Belongs to the KptA/TPT1 family.

In terms of biological role, removes the 2'-phosphate from RNA via an intermediate in which the phosphate is ADP-ribosylated by NAD followed by a presumed transesterification to release the RNA and generate ADP-ribose 1''-2''-cyclic phosphate (APPR&gt;P). May function as an ADP-ribosylase. In Methanosarcina acetivorans (strain ATCC 35395 / DSM 2834 / JCM 12185 / C2A), this protein is Probable RNA 2'-phosphotransferase.